The chain runs to 151 residues: Ribosome maturation factor RimP (151 aa).

This sequence belongs to the RimP family.

The protein localises to the cytoplasm. Functionally, required for maturation of 30S ribosomal subunits. The protein is Ribosome maturation factor RimP of Saccharophagus degradans (strain 2-40 / ATCC 43961 / DSM 17024).